A 212-amino-acid chain; its full sequence is Histidine biosynthesis bifunctional protein HisIE (212 aa).

The tract at residues 1 to 109 is phosphoribosyl-AMP cyclohydrolase; it reads MRPDFHKQEL…ELIPFDDSDI (109 aa). Residues 110–212 form a phosphoribosyl-ATP pyrophosphohydrolase region; the sequence is FSELEKQIID…KKEFHTRTAD (103 aa).

The protein in the N-terminal section; belongs to the PRA-CH family. It in the C-terminal section; belongs to the PRA-PH family.

It localises to the cytoplasm. The catalysed reaction is 1-(5-phospho-beta-D-ribosyl)-ATP + H2O = 1-(5-phospho-beta-D-ribosyl)-5'-AMP + diphosphate + H(+). It carries out the reaction 1-(5-phospho-beta-D-ribosyl)-5'-AMP + H2O = 1-(5-phospho-beta-D-ribosyl)-5-[(5-phospho-beta-D-ribosylamino)methylideneamino]imidazole-4-carboxamide. Its pathway is amino-acid biosynthesis; L-histidine biosynthesis; L-histidine from 5-phospho-alpha-D-ribose 1-diphosphate: step 2/9. The protein operates within amino-acid biosynthesis; L-histidine biosynthesis; L-histidine from 5-phospho-alpha-D-ribose 1-diphosphate: step 3/9. The chain is Histidine biosynthesis bifunctional protein HisIE (hisI) from Lactococcus lactis subsp. lactis (strain IL1403) (Streptococcus lactis).